Reading from the N-terminus, the 388-residue chain is Succinate--CoA ligase [ADP-forming] subunit beta (388 aa).

The ATP-grasp domain occupies 9–244; it reads KQLFAEYGLP…PSQDDAREAH (236 aa). ATP contacts are provided by residues lysine 46, 53 to 55, glutamate 99, threonine 102, and glutamate 107; that span reads GRG. Mg(2+) contacts are provided by asparagine 199 and aspartate 213. Substrate is bound by residues asparagine 264 and 321–323; that span reads GIV.

The protein belongs to the succinate/malate CoA ligase beta subunit family. In terms of assembly, heterotetramer of two alpha and two beta subunits. Mg(2+) is required as a cofactor.

The enzyme catalyses succinate + ATP + CoA = succinyl-CoA + ADP + phosphate. It catalyses the reaction GTP + succinate + CoA = succinyl-CoA + GDP + phosphate. It functions in the pathway carbohydrate metabolism; tricarboxylic acid cycle; succinate from succinyl-CoA (ligase route): step 1/1. Functionally, succinyl-CoA synthetase functions in the citric acid cycle (TCA), coupling the hydrolysis of succinyl-CoA to the synthesis of either ATP or GTP and thus represents the only step of substrate-level phosphorylation in the TCA. The beta subunit provides nucleotide specificity of the enzyme and binds the substrate succinate, while the binding sites for coenzyme A and phosphate are found in the alpha subunit. This chain is Succinate--CoA ligase [ADP-forming] subunit beta, found in Pseudomonas aeruginosa (strain LESB58).